A 364-amino-acid polypeptide reads, in one-letter code: MSGNSIGQNFVVTTFGESHGVALGCIIDGCPPGLELTVEDMQHDLDRRRPGTSRYTTARREADEVRILSGVFEGKTTGTSIGLLIENTDQRSQDYSDIKDTFRPGHADYTYQQKYGMRDYRGGGRSSARETAMRVAAGAVAKKYLKQVHGIEIHGYLAQLGPISADTIDLTQIEQNAFFFPDASKLEALDEYMRGLRKSGDSIGAKITVAATGVPVGLGEPVFDRLDADIAHALMGINAVKGVEIGDGFGVVTQKGSQGRDLMSPQGFASNHAGGVLGGISSGQPVVAHIALKPTSSISVPGQSMTVQGETIDMITKGRHDPCVGIRAVPIAEAMLAIVLMDHLLRHRAQNQDVTSQTPVIGMR.

NADP(+) contacts are provided by arginine 48 and arginine 54. FMN contacts are provided by residues 125–127 (RSS), 238–239 (NA), glycine 278, 293–297 (KPTSS), and arginine 319.

The protein belongs to the chorismate synthase family. Homotetramer. FMNH2 serves as cofactor.

The enzyme catalyses 5-O-(1-carboxyvinyl)-3-phosphoshikimate = chorismate + phosphate. It participates in metabolic intermediate biosynthesis; chorismate biosynthesis; chorismate from D-erythrose 4-phosphate and phosphoenolpyruvate: step 7/7. Catalyzes the anti-1,4-elimination of the C-3 phosphate and the C-6 proR hydrogen from 5-enolpyruvylshikimate-3-phosphate (EPSP) to yield chorismate, which is the branch point compound that serves as the starting substrate for the three terminal pathways of aromatic amino acid biosynthesis. This reaction introduces a second double bond into the aromatic ring system. This is Chorismate synthase from Shewanella frigidimarina (strain NCIMB 400).